Consider the following 125-residue polypeptide: uncharacterized protein (125 aa).

This is an uncharacterized protein from Microplitis demolitor (Parasitoid wasp).